Here is a 438-residue protein sequence, read N- to C-terminus: Xylose isomerase (438 aa).

Active-site residues include His-100 and Asp-103. Mg(2+)-binding residues include Glu-231, Glu-267, His-270, Asp-295, Asp-306, Asp-308, and Asp-338.

This sequence belongs to the xylose isomerase family. Homotetramer. The cofactor is Mg(2+).

It localises to the cytoplasm. It carries out the reaction alpha-D-xylose = alpha-D-xylulofuranose. This Pseudomonas fluorescens (strain Pf0-1) protein is Xylose isomerase.